The primary structure comprises 246 residues: uncharacterized protein (246 aa).

A signal peptide spans 1 to 24; that stretch reads MGAPLRHCLLVAAALSLGCGVAAA. A run of 2 helical transmembrane segments spans residues 71–91 and 104–124; these read YYLGSISGKKVIVAMTGIGLV and FTCASSIAIAAVMFSGVAGGA.

The protein resides in the cell membrane. This is an uncharacterized protein from Mycobacterium tuberculosis (strain ATCC 25618 / H37Rv).